A 156-amino-acid chain; its full sequence is 6,7-dimethyl-8-ribityllumazine synthase (156 aa).

5-amino-6-(D-ribitylamino)uracil-binding positions include Phe22, 57–59 (AYE), and 81–83 (TVI). Residue 86 to 87 (GT) participates in (2S)-2-hydroxy-3-oxobutyl phosphate binding. The active-site Proton donor is His89. Residue Phe114 participates in 5-amino-6-(D-ribitylamino)uracil binding. Arg128 serves as a coordination point for (2S)-2-hydroxy-3-oxobutyl phosphate.

The protein belongs to the DMRL synthase family. As to quaternary structure, forms an icosahedral capsid composed of 60 subunits, arranged as a dodecamer of pentamers.

The catalysed reaction is (2S)-2-hydroxy-3-oxobutyl phosphate + 5-amino-6-(D-ribitylamino)uracil = 6,7-dimethyl-8-(1-D-ribityl)lumazine + phosphate + 2 H2O + H(+). It functions in the pathway cofactor biosynthesis; riboflavin biosynthesis; riboflavin from 2-hydroxy-3-oxobutyl phosphate and 5-amino-6-(D-ribitylamino)uracil: step 1/2. In terms of biological role, catalyzes the formation of 6,7-dimethyl-8-ribityllumazine by condensation of 5-amino-6-(D-ribitylamino)uracil with 3,4-dihydroxy-2-butanone 4-phosphate. This is the penultimate step in the biosynthesis of riboflavin. This Serratia proteamaculans (strain 568) protein is 6,7-dimethyl-8-ribityllumazine synthase.